The sequence spans 735 residues: Ethylene receptor 1 (735 aa).

Transmembrane regions (helical) follow at residues 23 to 43, 54 to 74, and 92 to 112; these read ISDF…IYFV, VLVQ…INLW, and VLTA…IPDL. Cu cation contacts are provided by cysteine 65 and histidine 69. One can recognise a GAF domain in the interval 158–307; sequence DRHTILKTTL…VVADQVAVAL (150 aa). A Histidine kinase domain is found at 350-586; it reads VMNHEMRTPM…IFDVKLAISN (237 aa). At histidine 353 the chain carries Phosphohistidine; by autocatalysis. A Response regulatory domain is found at 609-726; sequence KVLVMDENGV…NMRNVLSDRL (118 aa). 4-aspartylphosphate is present on aspartate 657. Lysine 711 participates in a covalent cross-link: Glycyl lysine isopeptide (Lys-Gly) (interchain with G-Cter in ubiquitin).

It belongs to the ethylene receptor family. Homodimer; disulfide-linked. The cofactor is Cu cation. In terms of processing, activation probably requires a transfer of a phosphate group between a His in the transmitter domain and an Asp of the receiver domain.

The protein localises to the endoplasmic reticulum membrane. The enzyme catalyses ATP + protein L-histidine = ADP + protein N-phospho-L-histidine.. Its function is as follows. May act early in the ethylene signal transduction pathway, possibly as an ethylene receptor, or as a regulator of the pathway. The protein is Ethylene receptor 1 (ETR1) of Brassica oleracea (Wild cabbage).